The sequence spans 142 residues: Transmembrane protein 170A (142 aa).

The Lumenal segment spans residues 1–48; sequence MEGGGGGLGGEPGLLQQILSLRLVPRVGNVTDCQRATLCSFPEMWYGV. Asparagine 29 carries an N-linked (GlcNAc...) asparagine glycan. A helical membrane pass occupies residues 49–69; sequence FLWALVSSLFFHIPAGLLALF. Residues 70-78 are Cytoplasmic-facing; it reads TLRHHKYGR. Residues 79–99 form a helical membrane-spanning segment; that stretch reads FMSVGIFLMGVLGPISAGILT. Residues 100-114 are Lumenal-facing; it reads SAAIAGVYKAAGKEM. Residues 115–135 form a helical membrane-spanning segment; sequence IPFEALVLGVGQTFCVLIVSF. Over 136–142 the chain is Cytoplasmic; sequence LRILATL.

The protein belongs to the TMEM170 family.

It is found in the endoplasmic reticulum membrane. Its subcellular location is the nucleus envelope. Functionally, may regulate membrane morphogenesis in the endoplasmic reticulum (ER) by promoting ER sheet formation at the expense of ER tubules. This chain is Transmembrane protein 170A (tmem170a), found in Xenopus laevis (African clawed frog).